Reading from the N-terminus, the 186-residue chain is Small ribosomal subunit protein uS4 (186 aa).

One can recognise an S4 RNA-binding domain in the interval 106–170 (RRLQTIVYRK…SPLKDEDHPI (65 aa)). Residues 151 to 186 (EEEEVDYSPYSPLKDEDHPIRCEARGESPEETAAEE) are disordered. The span at 163–178 (LKDEDHPIRCEARGES) shows a compositional bias: basic and acidic residues.

Belongs to the universal ribosomal protein uS4 family. As to quaternary structure, part of the 30S ribosomal subunit. Contacts protein S5. The interaction surface between S4 and S5 is involved in control of translational fidelity.

Its function is as follows. One of the primary rRNA binding proteins, it binds directly to 16S rRNA where it nucleates assembly of the body of the 30S subunit. With S5 and S12 plays an important role in translational accuracy. In Methanopyrus kandleri (strain AV19 / DSM 6324 / JCM 9639 / NBRC 100938), this protein is Small ribosomal subunit protein uS4.